The primary structure comprises 254 residues: Transcription factor bHLH51 (254 aa).

Residues 62–111 (SLSRSHRLAEKRRRDRINSHLTALRKLVPNSDKLDKAALLATVIEQVKEL) enclose the bHLH domain.

As to quaternary structure, homodimer. As to expression, expressed constitutively in roots, stems, and flowers.

It localises to the nucleus. This is Transcription factor bHLH51 (BHLH51) from Arabidopsis thaliana (Mouse-ear cress).